The sequence spans 367 residues: DNA replication and repair protein RecF (367 aa).

An ATP-binding site is contributed by 30 to 37; sequence GENAQGKT.

This sequence belongs to the RecF family.

Its subcellular location is the cytoplasm. In terms of biological role, the RecF protein is involved in DNA metabolism; it is required for DNA replication and normal SOS inducibility. RecF binds preferentially to single-stranded, linear DNA. It also seems to bind ATP. This Chlamydia abortus (strain DSM 27085 / S26/3) (Chlamydophila abortus) protein is DNA replication and repair protein RecF.